A 183-amino-acid polypeptide reads, in one-letter code: Regulatory protein RecX (183 aa).

Residues 1 to 12 (MTSFPHPSTSES) show a composition bias toward polar residues. The disordered stretch occupies residues 1–26 (MTSFPHPSTSESGPDPDSEPNREEQA).

The protein belongs to the RecX family.

Its subcellular location is the cytoplasm. In terms of biological role, modulates RecA activity. The protein is Regulatory protein RecX of Mycobacterium sp. (strain JLS).